Reading from the N-terminus, the 191-residue chain is Transcription factor FapR (191 aa).

The MaoC-like domain maps to 102 to 169 (GIARGHHLFA…RILVTSHVNQ (68 aa)).

The protein belongs to the FapR family.

Its function is as follows. Transcriptional factor involved in regulation of membrane lipid biosynthesis by repressing genes involved in fatty acid and phospholipid metabolism. The polypeptide is Transcription factor FapR (Shouchella clausii (strain KSM-K16) (Alkalihalobacillus clausii)).